We begin with the raw amino-acid sequence, 283 residues long: Elongation factor Ts (283 aa).

Residues 80-83 (TDFV) form an involved in Mg(2+) ion dislocation from EF-Tu region.

This sequence belongs to the EF-Ts family.

It is found in the cytoplasm. Its function is as follows. Associates with the EF-Tu.GDP complex and induces the exchange of GDP to GTP. It remains bound to the aminoacyl-tRNA.EF-Tu.GTP complex up to the GTP hydrolysis stage on the ribosome. In Salmonella gallinarum (strain 287/91 / NCTC 13346), this protein is Elongation factor Ts.